The sequence spans 169 residues: Peptide deformylase 1 (169 aa).

Residues cysteine 91 and histidine 133 each contribute to the Fe cation site. The active site involves glutamate 134. Histidine 137 contributes to the Fe cation binding site.

The protein belongs to the polypeptide deformylase family. Fe(2+) is required as a cofactor.

The catalysed reaction is N-terminal N-formyl-L-methionyl-[peptide] + H2O = N-terminal L-methionyl-[peptide] + formate. In terms of biological role, removes the formyl group from the N-terminal Met of newly synthesized proteins. Requires at least a dipeptide for an efficient rate of reaction. N-terminal L-methionine is a prerequisite for activity but the enzyme has broad specificity at other positions. This chain is Peptide deformylase 1, found in Vibrio cholerae serotype O1 (strain ATCC 39315 / El Tor Inaba N16961).